Reading from the N-terminus, the 1777-residue chain is FERM and PDZ domain-containing protein 3 (1777 aa).

Positions 21-98 (QVTVHRDPIY…FIVLTVLHTH (78 aa)) constitute a PDZ domain. The 315-residue stretch at 147–461 (NVLKVFLENG…GYCRLLLDSR (315 aa)) folds into the FERM domain. 7 disordered regions span residues 491 to 520 (TGGHLGKKESSYVGSVGTSPRKSSRCTPPP), 555 to 574 (ETRPRTKSDPTSKSSGQGYE), 622 to 697 (QLGP…GRHL), 832 to 871 (SLGRPDPNPSLQPIATGQSPGPPGARRKLPQSEGQVQGER), 1014 to 1216 (SAPE…PFRL), 1309 to 1346 (RPQATQTPVPSLRGRERDRVLPSQRQPEAGPGVSLSSP), and 1732 to 1765 (QQQQQQQQQQQQVAAAAGAATEHPPGSPTSATVM). A compositionally biased stretch (polar residues) spans 502 to 511 (YVGSVGTSPR). Residues 555–564 (ETRPRTKSDP) are compositionally biased toward basic and acidic residues. Positions 649–659 (SEEEEEEEDET) are enriched in acidic residues. Composition is skewed to polar residues over residues 840-850 (PSLQPIATGQS), 1015-1035 (APETSWNSQHQLGAEVSSSPR), 1046-1056 (HLSQQEDSLPV), and 1094-1111 (LQKQGTISSQGEKAQLES). Positions 1134–1168 (QSPSCQSRSHSPSCQPHGHSPSSQSRGQSPSCQPR) are enriched in low complexity. Polar residues predominate over residues 1172-1202 (PLRSQAASRQVSTMPSRKLETTLNGAHSTSE). A compositionally biased stretch (low complexity) spans 1732-1751 (QQQQQQQQQQQQVAAAAGAA).

The sequence is that of FERM and PDZ domain-containing protein 3 from Homo sapiens (Human).